The sequence spans 207 residues: Large ribosomal subunit protein uL4 (207 aa).

The segment at 48–87 is disordered; sequence THAVKNRSAVSGGGKKPWRQKGTGRARQGSIRSPQFRGGG.

Belongs to the universal ribosomal protein uL4 family. In terms of assembly, part of the 50S ribosomal subunit.

In terms of biological role, one of the primary rRNA binding proteins, this protein initially binds near the 5'-end of the 23S rRNA. It is important during the early stages of 50S assembly. It makes multiple contacts with different domains of the 23S rRNA in the assembled 50S subunit and ribosome. Its function is as follows. Forms part of the polypeptide exit tunnel. This Limosilactobacillus reuteri subsp. reuteri (strain JCM 1112) (Lactobacillus reuteri) protein is Large ribosomal subunit protein uL4.